The following is a 326-amino-acid chain: Biotin synthase (326 aa).

A Radical SAM core domain is found at 51–278 (NRVQVSRLIS…KSFVRLSAGR (228 aa)). [4Fe-4S] cluster is bound by residues cysteine 66, cysteine 70, and cysteine 73. Cysteine 110, cysteine 141, cysteine 201, and arginine 273 together coordinate [2Fe-2S] cluster.

It belongs to the radical SAM superfamily. Biotin synthase family. Homodimer. Requires [4Fe-4S] cluster as cofactor. [2Fe-2S] cluster serves as cofactor.

The enzyme catalyses (4R,5S)-dethiobiotin + (sulfur carrier)-SH + 2 reduced [2Fe-2S]-[ferredoxin] + 2 S-adenosyl-L-methionine = (sulfur carrier)-H + biotin + 2 5'-deoxyadenosine + 2 L-methionine + 2 oxidized [2Fe-2S]-[ferredoxin]. It participates in cofactor biosynthesis; biotin biosynthesis; biotin from 7,8-diaminononanoate: step 2/2. Catalyzes the conversion of dethiobiotin (DTB) to biotin by the insertion of a sulfur atom into dethiobiotin via a radical-based mechanism. The chain is Biotin synthase from Paramagnetospirillum magneticum (strain ATCC 700264 / AMB-1) (Magnetospirillum magneticum).